Reading from the N-terminus, the 95-residue chain is Sec-independent protein translocase protein TatA (95 aa).

A helical membrane pass occupies residues 1–21 (MGSMSVWHWVIVAVVVMLLFG). The tract at residues 42-95 (GMADDETQPNTATSVPPVGPNDPVRTLPHQGAPGTAPQPPHVQPHVSAGDHKAV) is disordered.

Belongs to the TatA/E family. As to quaternary structure, the Tat system comprises two distinct complexes: a TatABC complex, containing multiple copies of TatA, TatB and TatC subunits, and a separate TatA complex, containing only TatA subunits. Substrates initially bind to the TatABC complex, which probably triggers association of the separate TatA complex to form the active translocon.

Its subcellular location is the cell inner membrane. Part of the twin-arginine translocation (Tat) system that transports large folded proteins containing a characteristic twin-arginine motif in their signal peptide across membranes. TatA could form the protein-conducting channel of the Tat system. The sequence is that of Sec-independent protein translocase protein TatA from Methylorubrum extorquens (strain CM4 / NCIMB 13688) (Methylobacterium extorquens).